Reading from the N-terminus, the 559-residue chain is NAD-dependent histone deacetylase SIR2 (559 aa).

The tract at residues 1–73 is disordered; the sequence is MSESASMLQG…NDHSAQEVAG (73 aa). Residues 39 to 51 show a composition bias toward basic and acidic residues; that stretch reads NDEKELLEATKAD. Residues 52-62 show a composition bias toward acidic residues; the sequence is ELDEVVDDYAE. Positions 223–514 constitute a Deacetylase sirtuin-type domain; it reads RLANFFTLDH…AFIAQKCGWD (292 aa). NAD(+) contacts are provided by residues 248–267 and 330–333; these read GAGI…KGFY and QNID. His-350 acts as the Proton acceptor in catalysis. The Zn(2+) site is built by Cys-358, Cys-361, Cys-382, and Cys-385. NAD(+)-binding positions include 458 to 460, 483 to 485, and Cys-500; these read GTS and NRD.

The protein belongs to the sirtuin family. Class I subfamily. Requires Zn(2+) as cofactor.

The protein localises to the nucleus. The catalysed reaction is N(6)-acetyl-L-lysyl-[protein] + NAD(+) + H2O = 2''-O-acetyl-ADP-D-ribose + nicotinamide + L-lysyl-[protein]. NAD-dependent deacetylase. Heterochromatin component that silences transcription at silent mating loci, telomeres and the ribosomal DNA, and that also suppresses recombination in the rDNA and extends replicative life span. It acts as a NAD-dependent histone deacetylase, which deacetylates 'Lys-9' and 'Lys-14' of Histone H3 and 'Lys-16' of Histone H4. The chain is NAD-dependent histone deacetylase SIR2 (SIR2) from Eremothecium gossypii (strain ATCC 10895 / CBS 109.51 / FGSC 9923 / NRRL Y-1056) (Yeast).